The sequence spans 342 residues: uncharacterized protein (342 aa).

Residue 9–31 (LIFGGTTGIGLMTTIDFIIHNTS) participates in NADP(+) binding. Substrate is bound at residue S208. Y222 (proton acceptor) is an active-site residue.

The protein belongs to the short-chain dehydrogenases/reductases (SDR) family.

This is an uncharacterized protein from Acanthamoeba polyphaga (Amoeba).